The sequence spans 96 residues: MYKDIDSHQRDSRTDGHQDGFKKNPNFRFFKKKTCKFCDMDRVPDYKEFDFLKKFITEQGKILPRRITGTSAKHQRRLALEIKKARYMALLPFVKK.

Residues 1-22 (MYKDIDSHQRDSRTDGHQDGFK) show a composition bias toward basic and acidic residues. The tract at residues 1-25 (MYKDIDSHQRDSRTDGHQDGFKKNP) is disordered.

It belongs to the bacterial ribosomal protein bS18 family. In terms of assembly, part of the 30S ribosomal subunit. Forms a tight heterodimer with protein bS6.

Its function is as follows. Binds as a heterodimer with protein bS6 to the central domain of the 16S rRNA, where it helps stabilize the platform of the 30S subunit. The polypeptide is Small ribosomal subunit protein bS18 (Borrelia duttonii (strain Ly)).